The sequence spans 671 residues: DNA ligase (671 aa).

NAD(+) contacts are provided by residues 32-36, 81-82, and E113; these read DAEYD and SL. The N6-AMP-lysine intermediate role is filled by K115. NAD(+)-binding residues include R136, E173, K290, and K314. Residues C408, C411, C426, and C432 each contribute to the Zn(2+) site. A BRCT domain is found at 593–671; it reads EIDSPFAGKT…EAEMIRLLGA (79 aa).

Belongs to the NAD-dependent DNA ligase family. LigA subfamily. The cofactor is Mg(2+). It depends on Mn(2+) as a cofactor.

It carries out the reaction NAD(+) + (deoxyribonucleotide)n-3'-hydroxyl + 5'-phospho-(deoxyribonucleotide)m = (deoxyribonucleotide)n+m + AMP + beta-nicotinamide D-nucleotide.. Its function is as follows. DNA ligase that catalyzes the formation of phosphodiester linkages between 5'-phosphoryl and 3'-hydroxyl groups in double-stranded DNA using NAD as a coenzyme and as the energy source for the reaction. It is essential for DNA replication and repair of damaged DNA. The chain is DNA ligase from Salmonella typhimurium (strain LT2 / SGSC1412 / ATCC 700720).